The sequence spans 137 residues: Fluoride-specific ion channel FluC 1 (137 aa).

The next 4 helical transmembrane spans lie at 4–24, 37–57, 67–87, and 98–118; these read LIYI…YYLG, LATL…TTYI, VITG…TLSV, and WGIA…MSGL. Residues Gly-77 and Thr-80 each coordinate Na(+).

This sequence belongs to the fluoride channel Fluc/FEX (TC 1.A.43) family.

It is found in the cell membrane. It carries out the reaction fluoride(in) = fluoride(out). With respect to regulation, na(+) is not transported, but it plays an essential structural role and its presence is essential for fluoride channel function. In terms of biological role, fluoride-specific ion channel. Important for reducing fluoride concentration in the cell, thus reducing its toxicity. This is Fluoride-specific ion channel FluC 1 from Bacillus anthracis.